The following is a 231-amino-acid chain: Septum site-determining protein MinC (231 aa).

It belongs to the MinC family. Interacts with MinD and FtsZ.

Functionally, cell division inhibitor that blocks the formation of polar Z ring septums. Rapidly oscillates between the poles of the cell to destabilize FtsZ filaments that have formed before they mature into polar Z rings. Prevents FtsZ polymerization. This chain is Septum site-determining protein MinC, found in Shigella flexneri.